The primary structure comprises 308 residues: Ornithine carbamoyltransferase (308 aa).

Residues 55 to 58, glutamine 82, arginine 106, and 133 to 136 each bind carbamoyl phosphate; these read STRT and HPCQ. Residues asparagine 164, aspartate 227, and 231-232 contribute to the L-ornithine site; that span reads SM. Residues 267 to 268 and arginine 295 contribute to the carbamoyl phosphate site; that span reads CL.

This sequence belongs to the aspartate/ornithine carbamoyltransferase superfamily. OTCase family.

The protein resides in the cytoplasm. It carries out the reaction carbamoyl phosphate + L-ornithine = L-citrulline + phosphate + H(+). It functions in the pathway amino-acid biosynthesis; L-arginine biosynthesis; L-arginine from L-ornithine and carbamoyl phosphate: step 1/3. Its function is as follows. Reversibly catalyzes the transfer of the carbamoyl group from carbamoyl phosphate (CP) to the N(epsilon) atom of ornithine (ORN) to produce L-citrulline. The polypeptide is Ornithine carbamoyltransferase (Prochlorococcus marinus subsp. pastoris (strain CCMP1986 / NIES-2087 / MED4)).